The following is a 192-amino-acid chain: MLVKEREEKLNRVLVALLGIPVVFSIIRAKIVETIGYFIFWLGGFSPYVYEKITHQEIPERTKLMLSSSVFLHSVMGQFLNFYEKIFFWDKILHFYGSFVITYFFYQILTKKSRFWDEVPGAVLMAFLLGVFSGVLWEIAEFTTDKILPDYNTQKGLDDTMLDLIFDLLGCYTMAKIVYRKKTGRFFWRPRS.

2 helical membrane-spanning segments follow: residues 31–51 (IVETIGYFIFWLGGFSPYVYE) and 119–139 (VPGAVLMAFLLGVFSGVLWEI).

The protein resides in the cell membrane. This is an uncharacterized protein from Thermotoga maritima (strain ATCC 43589 / DSM 3109 / JCM 10099 / NBRC 100826 / MSB8).